The sequence spans 412 residues: Multifunctional CCA protein (412 aa).

Glycine 8 and arginine 11 together coordinate ATP. Residues glycine 8 and arginine 11 each coordinate CTP. Mg(2+)-binding residues include glutamate 21 and aspartate 23. The ATP site is built by arginine 91, arginine 137, and arginine 140. Residues arginine 91, arginine 137, and arginine 140 each contribute to the CTP site. Residues 228–329 enclose the HD domain; the sequence is TGIHTLMTLA…LKLFNAIDVW (102 aa).

Belongs to the tRNA nucleotidyltransferase/poly(A) polymerase family. Bacterial CCA-adding enzyme type 1 subfamily. In terms of assembly, monomer. Can also form homodimers and oligomers. It depends on Mg(2+) as a cofactor. Ni(2+) is required as a cofactor.

The catalysed reaction is a tRNA precursor + 2 CTP + ATP = a tRNA with a 3' CCA end + 3 diphosphate. It carries out the reaction a tRNA with a 3' CCA end + 2 CTP + ATP = a tRNA with a 3' CCACCA end + 3 diphosphate. Catalyzes the addition and repair of the essential 3'-terminal CCA sequence in tRNAs without using a nucleic acid template. Adds these three nucleotides in the order of C, C, and A to the tRNA nucleotide-73, using CTP and ATP as substrates and producing inorganic pyrophosphate. tRNA 3'-terminal CCA addition is required both for tRNA processing and repair. Also involved in tRNA surveillance by mediating tandem CCA addition to generate a CCACCA at the 3' terminus of unstable tRNAs. While stable tRNAs receive only 3'-terminal CCA, unstable tRNAs are marked with CCACCA and rapidly degraded. The polypeptide is Multifunctional CCA protein (Yersinia pestis).